A 283-amino-acid polypeptide reads, in one-letter code: Large ribosomal subunit protein uL4 (283 aa).

The protein belongs to the universal ribosomal protein uL4 family. As to quaternary structure, part of the 50S ribosomal subunit.

Functionally, one of the primary rRNA binding proteins, this protein initially binds near the 5'-end of the 23S rRNA. It is important during the early stages of 50S assembly. It makes multiple contacts with different domains of the 23S rRNA in the assembled 50S subunit and ribosome. Forms part of the polypeptide exit tunnel. The chain is Large ribosomal subunit protein uL4 from Pyrobaculum aerophilum (strain ATCC 51768 / DSM 7523 / JCM 9630 / CIP 104966 / NBRC 100827 / IM2).